The chain runs to 393 residues: Glucose-1-phosphate adenylyltransferase (393 aa).

Alpha-D-glucose 1-phosphate-binding positions include Y105, G170, 185 to 186 (EK), and S196.

Belongs to the bacterial/plant glucose-1-phosphate adenylyltransferase family. Homotetramer.

The catalysed reaction is alpha-D-glucose 1-phosphate + ATP + H(+) = ADP-alpha-D-glucose + diphosphate. It participates in glycan biosynthesis; glycogen biosynthesis. Involved in the biosynthesis of ADP-glucose, a building block required for the elongation reactions to produce glycogen. Catalyzes the reaction between ATP and alpha-D-glucose 1-phosphate (G1P) to produce pyrophosphate and ADP-Glc. This Clostridium perfringens (strain 13 / Type A) protein is Glucose-1-phosphate adenylyltransferase.